The chain runs to 69 residues: UPF0337 protein XAC4007 (69 aa).

It belongs to the UPF0337 (CsbD) family.

The sequence is that of UPF0337 protein XAC4007 from Xanthomonas axonopodis pv. citri (strain 306).